The chain runs to 454 residues: F-box protein At1g67130 (454 aa).

One can recognise an F-box domain in the interval 4–53; the sequence is GETLDSIPTDLILDILSRLPTKSIARFHCVSKLWSSMLASQDFTRLFVNR.

This is F-box protein At1g67130 from Arabidopsis thaliana (Mouse-ear cress).